Reading from the N-terminus, the 298-residue chain is Transcription factor BOA (298 aa).

Disordered stretches follow at residues 1-26 (MGKEVMVSDYGDDDGEDAGGGDEYRI), 79-143 (LRSS…KRPR), and 206-232 (EDPYSSSDQLFSSTPVPPQSFQDGGGS). Residues 10–20 (YGDDDGEDAGG) are compositionally biased toward acidic residues. A compositionally biased stretch (basic and acidic residues) spans 104–113 (DPKKQKKSDG). Residues 122–131 (STAEEGDSGP) show a composition bias toward acidic residues. Residues 138–197 (TSKRPRLVWTPQLHKRFVDVVAHLGIKNAVPKTIMQLMNVEGLTRENVASHLQKYRLYLK) constitute a DNA-binding region (myb-like GARP). A compositionally biased stretch (polar residues) spans 209–227 (YSSSDQLFSSTPVPPQSFQ).

Its subcellular location is the nucleus. Transcription factor that is a critical component of the regulatory circuit of the circadian clock. Binds to specific sites on CCA1 promoter leading to CCA1 activation. Is required for the rhythmic expression of other clock genes such as LHY, GI and APRR1/TOC1. The protein is Transcription factor BOA (BOA) of Arabidopsis thaliana (Mouse-ear cress).